The primary structure comprises 192 residues: GTP cyclohydrolase-2 (192 aa).

50–54 (RLHSE) is a binding site for GTP. Residues Cys-55, Cys-66, and Cys-68 each coordinate Zn(2+). Residues 92–94 (EGR) and Thr-114 contribute to the GTP site. Catalysis depends on Asp-126, which acts as the Proton acceptor. The active-site Nucleophile is the Arg-128. GTP is bound by residues Thr-149 and Lys-154.

This sequence belongs to the GTP cyclohydrolase II family. Requires Zn(2+) as cofactor.

The enzyme catalyses GTP + 4 H2O = 2,5-diamino-6-hydroxy-4-(5-phosphoribosylamino)-pyrimidine + formate + 2 phosphate + 3 H(+). It functions in the pathway cofactor biosynthesis; riboflavin biosynthesis; 5-amino-6-(D-ribitylamino)uracil from GTP: step 1/4. Catalyzes the conversion of GTP to 2,5-diamino-6-ribosylamino-4(3H)-pyrimidinone 5'-phosphate (DARP), formate and pyrophosphate. The protein is GTP cyclohydrolase-2 of Helicobacter pylori (strain P12).